Reading from the N-terminus, the 315-residue chain is Ornithine carbamoyltransferase (315 aa).

Residues 53–56 (STRT), Gln80, Arg104, and 131–134 (HPCQ) contribute to the carbamoyl phosphate site. Residues Asn163, Asp227, and 231 to 232 (SM) each bind L-ornithine. Carbamoyl phosphate is bound by residues 267–268 (CL) and Arg295.

Belongs to the aspartate/ornithine carbamoyltransferase superfamily. OTCase family.

The protein localises to the cytoplasm. It catalyses the reaction carbamoyl phosphate + L-ornithine = L-citrulline + phosphate + H(+). It participates in amino-acid degradation; L-arginine degradation via ADI pathway; carbamoyl phosphate from L-arginine: step 2/2. In terms of biological role, reversibly catalyzes the transfer of the carbamoyl group from carbamoyl phosphate (CP) to the N(epsilon) atom of ornithine (ORN) to produce L-citrulline. The chain is Ornithine carbamoyltransferase from Rhodococcus opacus (strain B4).